The following is a 201-amino-acid chain: LexA repressor (201 aa).

The segment at residues 28–48 (MRDIAAHLRISGTLGVSKHLT) is a DNA-binding region (H-T-H motif). Active-site for autocatalytic cleavage activity residues include Ser120 and Lys157.

Belongs to the peptidase S24 family. As to quaternary structure, homodimer.

It carries out the reaction Hydrolysis of Ala-|-Gly bond in repressor LexA.. Represses a number of genes involved in the response to DNA damage (SOS response), including recA and lexA. In the presence of single-stranded DNA, RecA interacts with LexA causing an autocatalytic cleavage which disrupts the DNA-binding part of LexA, leading to derepression of the SOS regulon and eventually DNA repair. The sequence is that of LexA repressor from Geobacter metallireducens (strain ATCC 53774 / DSM 7210 / GS-15).